We begin with the raw amino-acid sequence, 225 residues long: Holliday junction branch migration complex subunit RuvA (225 aa).

The interval 1 to 71 (MISWINGDLV…EDSDLLFGFT (71 aa)) is domain I. Residues 72-150 (SKDQKNFFIE…SEILSEEEKS (79 aa)) form a domain II region. Residues 151 to 161 (KDEFEIKDPEI) are flexible linker. The segment at 161–225 (IIKMIEDLQL…LDEDSSNKDR (65 aa)) is domain III.

This sequence belongs to the RuvA family. In terms of assembly, homotetramer. Forms an RuvA(8)-RuvB(12)-Holliday junction (HJ) complex. HJ DNA is sandwiched between 2 RuvA tetramers; dsDNA enters through RuvA and exits via RuvB. An RuvB hexamer assembles on each DNA strand where it exits the tetramer. Each RuvB hexamer is contacted by two RuvA subunits (via domain III) on 2 adjacent RuvB subunits; this complex drives branch migration. In the full resolvosome a probable DNA-RuvA(4)-RuvB(12)-RuvC(2) complex forms which resolves the HJ.

The protein localises to the cytoplasm. Functionally, the RuvA-RuvB-RuvC complex processes Holliday junction (HJ) DNA during genetic recombination and DNA repair, while the RuvA-RuvB complex plays an important role in the rescue of blocked DNA replication forks via replication fork reversal (RFR). RuvA specifically binds to HJ cruciform DNA, conferring on it an open structure. The RuvB hexamer acts as an ATP-dependent pump, pulling dsDNA into and through the RuvAB complex. HJ branch migration allows RuvC to scan DNA until it finds its consensus sequence, where it cleaves and resolves the cruciform DNA. This chain is Holliday junction branch migration complex subunit RuvA, found in Prochlorococcus marinus (strain AS9601).